A 184-amino-acid polypeptide reads, in one-letter code: Gremlin-1 (184 aa).

The N-terminal stretch at 1 to 24 (MVRTLYAIGAVFLLTGFLLPTAEG) is a signal peptide. A disordered region spans residues 24-77 (GRKRNRGSQGAIPPPDKDQPNDSEQMQTQQQSGSRHRERGKGTSMPAEEVLESS). A glycan (N-linked (GlcNAc...) asparagine) is linked at N44. Residues 45–56 (DSEQMQTQQQSG) are compositionally biased toward polar residues. 4 disulfides stabilise this stretch: C94–C144, C108–C158, C118–C176, and C122–C178. One can recognise a CTCK domain in the interval 94 to 184 (CKTQPLKQTI…ECRCISIDLD (91 aa)).

It belongs to the DAN family.

The protein localises to the secreted. Its function is as follows. Cytokine that may play a role in the development of the medial pallium and during optic nerve and pecten development by modulating BMP signaling. This chain is Gremlin-1 (GREM1), found in Gallus gallus (Chicken).